The sequence spans 95 residues: UPF0235 protein Adeh_1087 (95 aa).

Belongs to the UPF0235 family.

The protein is UPF0235 protein Adeh_1087 of Anaeromyxobacter dehalogenans (strain 2CP-C).